A 496-amino-acid polypeptide reads, in one-letter code: Nucleolar and spindle-associated protein 1-B (496 aa).

Disordered stretches follow at residues 44-206, 250-294, and 338-496; these read YPES…HEAH, TPVS…STAN, and KSSS…VPVK. Positions 56–69 are enriched in polar residues; that stretch reads GCTSLTDTDELNSS. The segment covering 121–134 has biased composition (basic and acidic residues); it reads TQDKDCLESKKKEV. A compositionally biased stretch (polar residues) spans 150–159; sequence QDTSKQNNSE. The segment covering 261 to 281 has biased composition (low complexity); it reads SRLSLLSPLPRTTGASPSRTP. Polar residues-rich tracts occupy residues 376-396 and 403-423; these read NTTI…NKAN and AQNT…QASL. Over residues 447–459 the composition is skewed to low complexity; sequence SGSNSNVSVLKNN. Basic and acidic residues predominate over residues 467-485; sequence TREERRKQHELDRKGKRDQ.

This sequence belongs to the NUSAP family. Interacts with DNA, microtubules, ipo7, kpna2 and kpnb1. Microtubule stabilization is inhibited by ipo7 and kpna2, while microtubule bundling is inhibited by kpnb1. Active GTP-bound ran causes dissociation of ipo7 and kpnb1.

The protein localises to the cytoplasm. The protein resides in the nucleus. Its subcellular location is the cytoskeleton. It localises to the spindle. Its function is as follows. Microtubule-associated protein with the capacity to bundle and stabilize microtubules. May associate with chromosomes and promote the organization of meiotic or mitotic spindle microtubules around them. The sequence is that of Nucleolar and spindle-associated protein 1-B (nusap1-b) from Xenopus laevis (African clawed frog).